Here is a 948-residue protein sequence, read N- to C-terminus: Isoleucine--tRNA ligase (948 aa).

Residues 58–68 (PYANGSIHIGH) carry the 'HIGH' region motif. Glu572 lines the L-isoleucyl-5'-AMP pocket. The 'KMSKS' region motif lies at 613–617 (KMSKS). Lys616 lines the ATP pocket. 4 residues coordinate Zn(2+): Cys911, Cys914, Cys931, and Cys934.

It belongs to the class-I aminoacyl-tRNA synthetase family. IleS type 1 subfamily. As to quaternary structure, monomer. Requires Zn(2+) as cofactor.

Its subcellular location is the cytoplasm. It carries out the reaction tRNA(Ile) + L-isoleucine + ATP = L-isoleucyl-tRNA(Ile) + AMP + diphosphate. In terms of biological role, catalyzes the attachment of isoleucine to tRNA(Ile). As IleRS can inadvertently accommodate and process structurally similar amino acids such as valine, to avoid such errors it has two additional distinct tRNA(Ile)-dependent editing activities. One activity is designated as 'pretransfer' editing and involves the hydrolysis of activated Val-AMP. The other activity is designated 'posttransfer' editing and involves deacylation of mischarged Val-tRNA(Ile). The sequence is that of Isoleucine--tRNA ligase from Edwardsiella ictaluri (strain 93-146).